A 681-amino-acid polypeptide reads, in one-letter code: MQKGNIGVTTENIFPIIKKFLYSDHEIFLRELVSNAVDATQKLNTLASISEFKGELGDLTVHVSLGKDTITISDRGIGLTAEEIDKYINQIAFSGANDFLEKYKNDANAIIGHFGLGFYSAFMVSKKVEIITKSYKEGAQAVKWTCDGSPEFTLEEVEKADRGTDIVLYIDDDCKEFLEESRISALLKKYCSFLPVPIAFGKKKEWKDGKQVETAEDNVINDTIPLWTKKPSELSDEDYKKFYRELYPMSDEPLFWIHLNVDYPFHLTGILYFPKVKSNIDLNKNKIQLYCNQVYVTDSVEGIVPDFLTLLHGVLDSPDIPLNVSRSYLQSDSNVKKISTYISKKVSDRLQSIFKNDRAQFEEKWNDLKIFINYGMLTQEDFYDKAQKFALFTDTDGKHYTFEEYQTLIKDNQTDKDKNLIYLYANNKDEQFAYIEAAKNKGYNVLLMDGQLDVAMVSMLEQKLEKSRFTRVDSDVVDNLIVKEDKKSDVLEASKQEALSAAFKSQLPKMEKVEFNVMTQALGENGSPVMITQSEYMRRMKEMANIQAGMSFYGEMPDMFNLVLNSDHKLVKEVLADEEKECSAAIAPIQTELEDVTKRRDALKKKQEGKKDEDIPTAEKDELNDLDKKWDELKQQKDSIFAGYAGKNKVVRQLIDLALLQNNMLKGEALNNFVKRSIELI.

The segment at 1–326 (MQKGNIGVTT…SPDIPLNVSR (326 aa)) is a; substrate-binding. Residues 327–545 (SYLQSDSNVK…YMRRMKEMAN (219 aa)) are b. Positions 546 to 681 (IQAGMSFYGE…NFVKRSIELI (136 aa)) are c. The interval 601-620 (DALKKKQEGKKDEDIPTAEK) is disordered.

This sequence belongs to the heat shock protein 90 family. In terms of assembly, homodimer.

The protein resides in the cytoplasm. In terms of biological role, molecular chaperone. Has ATPase activity. The polypeptide is Chaperone protein HtpG (Bacteroides fragilis (strain ATCC 25285 / DSM 2151 / CCUG 4856 / JCM 11019 / LMG 10263 / NCTC 9343 / Onslow / VPI 2553 / EN-2)).